The primary structure comprises 120 residues: uncharacterized protein (120 aa).

It to M.jannaschii MJ1503.

This is an uncharacterized protein from Methanocaldococcus jannaschii (strain ATCC 43067 / DSM 2661 / JAL-1 / JCM 10045 / NBRC 100440) (Methanococcus jannaschii).